A 105-amino-acid chain; its full sequence is Protein SMALL AUXIN UP-REGULATED RNA 16 (105 aa).

It belongs to the ARG7 family. As to expression, expressed in etiolated hypocotyls, cotyledons, leaves, flowers and siliques.

The protein resides in the cell membrane. In terms of biological role, provide a mechanistic link between auxin and plasma membrane H(+)-ATPases (PM H(+)-ATPases, e.g. AHA1 and AHA2), and triggers PM H(+)-ATPases activity by promoting phosphorylation of their C-terminal autoinhibitory domain as a result of PP2C-D subfamily of type 2C phosphatases inhibition, thus leading to the acidification of the apoplast and the facilitation of solutes and water uptake to drive cell expansion. Triggers plant growth probably by promoting cell elongation. Regulates branch angles and bending. The protein is Protein SMALL AUXIN UP-REGULATED RNA 16 of Arabidopsis thaliana (Mouse-ear cress).